The chain runs to 585 residues: Regulatory protein BlaR1 (585 aa).

Residues 1–4 lie on the Extracellular side of the membrane; the sequence is MAKL. Residues 5–22 traverse the membrane as a helical segment; the sequence is LIMSIVSFCFIFLLLLFF. The Cytoplasmic portion of the chain corresponds to 23 to 31; the sequence is RYILKRYFN. Residues 32-48 form a helical membrane-spanning segment; that stretch reads YMLNYKVWYLTLLAGLI. Topologically, residues 49–104 are extracellular; the sequence is PFIPIKFSLFKFNNVNNQAPTVESKSHDLNHNINTTKPIQEFATDIHKFNWDSIDN. The helical transmembrane segment at 105–122 threads the bilayer; sequence ISTVIWIVLVIILSFKFL. The Cytoplasmic segment spans residues 123 to 311; it reads KALLYLKYLK…NLKKQSKLIL (189 aa). The chain crosses the membrane as a helical span at residues 312–328; it reads IFICIFTFLLMVIQSQF. Residues 329–585 lie on the Extracellular side of the membrane; that stretch reads LMGQSITDYN…LKEMGVLNGQ (257 aa). The segment at 331-585 is beta-lactam antibiotic sensor domain; sequence GQSITDYNYK…LKEMGVLNGQ (255 aa). Catalysis depends on S389, which acts as the Acyl-ester intermediate. N6-carboxylysine is present on K392.

It belongs to the peptidase M56 family. Post-translationally, carboxylation occurs on two lysine residues. Carboxylation at 'Lys-392' activates the active site serine residue for acylation. On acylation, the lysine side chain experiences a spontaneous decarboxylation that entraps the sensor in its activated state.

It localises to the cell membrane. Integral membrane protein involved in sensing of the presence of beta-lactam antibiotics and transduction of the information to the cytoplasm. Mechanistically, activation of the signal transducer involves acylation of a serine in the C-terminal sensor domain upon binding of the beta-lactam antibiotic. In turn, a conformational change occurs and the signal is transmitted from the cell surface to the cytoplasm. There, the zinc protease domain is activated and initiates autoproteolysis as well as cleavage of the transcriptional repressor BlaI leading to derepression of antibiotic resistance genes. This Staphylococcus aureus protein is Regulatory protein BlaR1 (blaR1).